Consider the following 134-residue polypeptide: STAG3-like protein 3 (134 aa).

One can recognise an SCD domain in the interval 10–95 (PKVTCRDVLP…GCFKDWMVSM (86 aa)).

The protein belongs to the SCC3 family.

The protein resides in the nucleus. The chain is STAG3-like protein 3 (STAG3L3) from Homo sapiens (Human).